Consider the following 1040-residue polypeptide: Multidrug resistance protein MdtB (1040 aa).

Transmembrane regions (helical) follow at residues 25-45 (LLMAAILLAGIIGYRFLPVAA), 347-367 (LMLAIALVVMIIYLFLRNIPA), 369-389 (IIPGVAVPLSLIGTFAVMVFL), 396-416 (LTLMALTIATGFVVDDAIVVI), 440-460 (IGFTIISLTFSLIAVLIPLLF), 472-492 (FAVTLAVAILISAVVSLTLTP), 537-557 (WLTLSVAFATLLLSVMLWIVI), 863-883 (LGSTVWLIVAAVVAMYIVLGV), 888-908 (FIHPITILSTLPTAGVGALLA), 910-930 (IIAGSELDIIAIIGIILLIGI), 968-988 (ILMTTLAALLGALPLMLSTGV), and 998-1018 (IAMVGGLLVSQVLTLFTTPVI).

This sequence belongs to the resistance-nodulation-cell division (RND) (TC 2.A.6) family. MdtB subfamily. As to quaternary structure, part of a tripartite efflux system composed of MdtA, MdtB and MdtC. MdtB forms a heteromultimer with MdtC.

It localises to the cell inner membrane. The polypeptide is Multidrug resistance protein MdtB (Salmonella schwarzengrund (strain CVM19633)).